The following is a 356-amino-acid chain: Tyrosine recombinase XerS (356 aa).

In terms of domain architecture, Core-binding (CB) spans 16–121 (LMPWYVLEYY…ALSSLYKYLT (106 aa)). The region spanning 169–354 (GFLTYIDQEH…VNDEQKNALD (186 aa)) is the Tyr recombinase domain. Catalysis depends on residues Arg-210, Lys-234, His-306, Arg-309, and His-332. Residue Tyr-341 is the O-(3'-phospho-DNA)-tyrosine intermediate of the active site.

It belongs to the 'phage' integrase family. XerS subfamily.

It is found in the cytoplasm. FtsK is required for recombination. Its function is as follows. Site-specific tyrosine recombinase, which acts by catalyzing the cutting and rejoining of the recombining DNA molecules. Essential to convert dimers of the bacterial chromosome into monomers to permit their segregation at cell division. The polypeptide is Tyrosine recombinase XerS (Streptococcus pneumoniae serotype 2 (strain D39 / NCTC 7466)).